The sequence spans 214 residues: Large ribosomal subunit protein uL3 (214 aa).

A disordered region spans residues Lys131–Gln153. Over residues Ser132–Val145 the composition is skewed to polar residues. Gln153 is subject to N5-methylglutamine.

Belongs to the universal ribosomal protein uL3 family. In terms of assembly, part of the 50S ribosomal subunit. Forms a cluster with proteins L14 and L19. In terms of processing, methylated by PrmB.

Functionally, one of the primary rRNA binding proteins, it binds directly near the 3'-end of the 23S rRNA, where it nucleates assembly of the 50S subunit. The chain is Large ribosomal subunit protein uL3 from Thiobacillus denitrificans (strain ATCC 25259 / T1).